Reading from the N-terminus, the 271-residue chain is Undecaprenyl-diphosphatase (271 aa).

The next 8 helical transmembrane spans lie at 5–25, 45–65, 86–106, 114–134, 149–169, 189–209, 226–246, and 251–271; these read YALFVAFVLGIVEGLTEFLPV, AATFEVVIQMGSILAVVAVFW, TLSLVHIILGMLPAVIIGLAI, LFGPQTVMYALVAGGILLIIA, ISYKQALGIGLFQCLALWPGF, AAEFSFILAVPMMVAASGLDL, VGFITAFVVAMIAIKTFLALI, and FIPFAIYRFVVAFAVYLVFVA.

The protein belongs to the UppP family.

The protein localises to the cell inner membrane. It carries out the reaction di-trans,octa-cis-undecaprenyl diphosphate + H2O = di-trans,octa-cis-undecaprenyl phosphate + phosphate + H(+). In terms of biological role, catalyzes the dephosphorylation of undecaprenyl diphosphate (UPP). Confers resistance to bacitracin. The chain is Undecaprenyl-diphosphatase from Aeromonas hydrophila subsp. hydrophila (strain ATCC 7966 / DSM 30187 / BCRC 13018 / CCUG 14551 / JCM 1027 / KCTC 2358 / NCIMB 9240 / NCTC 8049).